The following is a 563-amino-acid chain: Phosphomethylpyrimidine synthase (563 aa).

Substrate is bound by residues Asn-180, Met-209, Tyr-238, His-274, 294 to 296 (SRG), 335 to 338 (DGLR), and Glu-374. His-378 provides a ligand contact to Zn(2+). Tyr-401 is a binding site for substrate. His-442 contacts Zn(2+). Cys-522, Cys-525, and Cys-530 together coordinate [4Fe-4S] cluster.

Belongs to the ThiC family. It depends on [4Fe-4S] cluster as a cofactor.

It carries out the reaction 5-amino-1-(5-phospho-beta-D-ribosyl)imidazole + S-adenosyl-L-methionine = 4-amino-2-methyl-5-(phosphooxymethyl)pyrimidine + CO + 5'-deoxyadenosine + formate + L-methionine + 3 H(+). The protein operates within cofactor biosynthesis; thiamine diphosphate biosynthesis. Functionally, catalyzes the synthesis of the hydroxymethylpyrimidine phosphate (HMP-P) moiety of thiamine from aminoimidazole ribotide (AIR) in a radical S-adenosyl-L-methionine (SAM)-dependent reaction. This is Phosphomethylpyrimidine synthase from Geobacillus thermodenitrificans (strain NG80-2).